A 393-amino-acid chain; its full sequence is S-adenosylmethionine synthase 1 (393 aa).

A Mg(2+)-binding site is contributed by glutamate 9. Histidine 15 serves as a coordination point for ATP. Glutamate 43 contacts K(+). Glutamate 56 and glutamine 99 together coordinate L-methionine. Residues 167-169 (DGK), 235-238 (SGRF), aspartate 246, 252-253 (RK), alanine 269, lysine 273, and lysine 277 contribute to the ATP site. Aspartate 246 contacts L-methionine. Lysine 277 serves as a coordination point for L-methionine.

The protein belongs to the AdoMet synthase family. Homotetramer. The cofactor is Mn(2+). Mg(2+) serves as cofactor. Co(2+) is required as a cofactor. It depends on K(+) as a cofactor. Requires NH4(+) as cofactor. In terms of tissue distribution, mostly expressed in roots, and, to a lower extent, in hypocotyls and cotyledons.

The protein resides in the cytoplasm. It carries out the reaction L-methionine + ATP + H2O = S-adenosyl-L-methionine + phosphate + diphosphate. It functions in the pathway amino-acid biosynthesis; S-adenosyl-L-methionine biosynthesis; S-adenosyl-L-methionine from L-methionine: step 1/1. Inhibited by products of SAMS reaction (SAM, Pi, PPi), substrate analogs (cycloleucine and ethionine), and alternative nucleotides (GTP, CTP and ADP). Strongly repressed by PPPi. Catalyzes the formation of S-adenosylmethionine from methionine and ATP. The reaction comprises two steps that are both catalyzed by the same enzyme: formation of S-adenosylmethionine (AdoMet) and triphosphate, and subsequent hydrolysis of the triphosphate. The polypeptide is S-adenosylmethionine synthase 1 (SAMS1) (Catharanthus roseus (Madagascar periwinkle)).